Here is a 909-residue protein sequence, read N- to C-terminus: MSQSDPLNVVSRILNKISKDNFQVLIDQLVSKCQLLDKNESTLFINNIFEKVVEEPSSSSYYIQIINKIQPIFQQNFSIGVGNKLVENFNKRYQILTDQINSNEETFDFNSSKQSFLNLCKFMGECYYTLPSSFLVDVVNNHLPQVTKETADDMTLQQLMEIEIIATSFTSAGKTIESMGGFSSKHENNKTHNNNNNNNNHDHDDDDHDEEDNENNYENTTSTTNNINNNNIQSRENDLHFKGIQKALEDATSVLSFLIENRQLLPPRVRFMVKNLFELKNNKWIIPKAINDDLNAQREVVKVATNHGKTISKSLSEKCDDDSTLNTIFWKSFFQALGIQNYKILRQLMLDDKSNISPSSTSPTIPLSPFLRRSMNITSPSQFNLNNCNNNNNSININNNNMDIDASFDLNDGLMESSSNNNNSNSQLQFSLSSSSGIKDNHNVPTIDLNTISSNNNQQINLPSGFLSPKVARSNSPSLSSVVKQPQSQQNNNNNNNNNNNNTTITTTTSSNNNINNNNNNNNNNKIKESPELSSAPDSNLSVIVSIIDSKIWTPQKEIWKKKIMNKIIPMKSILKKPQKIEILAAIWQNMCDNNYEYGSYLDLCLNLIKMDEGDISPLYSLDGGNVPPVKPYQQSAQPPPPPPSSSSSSAQQPPNEPVNPLLNKLKGPNRRSSMATLQMKPSGISEARRSSISVPFELNRRGSLSGDIPSYCPPAPKLKSTPTLKSTPAIVQNGGSITSTSSSSSSSSSSSSSTTKNIHPTSESKKQPIAKKHKPDLDSFKDVLISSLQDDFALKMFVKKRSLTTYMELLKDLYREFIIEIPLLLKCISLVHNGLYELTDEECTMLFDLEEMAQEQQNLEKQNDQQQNLLTQNNQIFQWKTNTWEEKPQTPPPPPTSYFDLGSDVFVL.

Residues 7–283 (LNVVSRILNK…KNLFELKNNK (277 aa)) form the MIF4G domain. Disordered regions lie at residues 178–232 (SMGG…NNNI), 415–439 (MESS…SGIK), 460–537 (INLP…SSAP), 627–689 (VPPV…SEAR), and 704–774 (SLSG…AKKH). Over residues 204 to 215 (DDDDHDEEDNEN) the composition is skewed to acidic residues. Composition is skewed to low complexity over residues 216–231 (NYEN…NNNN) and 417–436 (SSSN…SSSS). The span at 473–490 (RSNSPSLSSVVKQPQSQQ) shows a compositional bias: polar residues. The segment covering 491 to 525 (NNNNNNNNNNNNTTITTTTSSNNNINNNNNNNNNN) has biased composition (low complexity). Over residues 721-738 (STPTLKSTPAIVQNGGSI) the composition is skewed to polar residues. Over residues 739–756 (TSTSSSSSSSSSSSSSTT) the composition is skewed to low complexity. The stretch at 845-877 (TMLFDLEEMAQEQQNLEKQNDQQQNLLTQNNQI) forms a coiled coil.

In terms of biological role, plays as essential role in regulating terminal differentiation. The chain is Yellow mounds protein A (yelA) from Dictyostelium discoideum (Social amoeba).